Here is a 350-residue protein sequence, read N- to C-terminus: MDHTASLSPVRPEAQPTDDRERALRPRLLKDFLGQEKTKRNLRLFIQAARDRNESLDHLFLIGPPGLGKTTLAHITACELGVECKVTGAPALDKPKDLAGILTALSERSVFFVDEIHRLKPAIEEMLYIAMEDYELDWVIGQGPSARTVRIPLPPFTLIGATTRAGMVSSPLISRFGIVERFEFYTPEELAAIVQRSARLLDITLDARAALALARCSRGTPRVANRLLRRIRDFAQVAGSAHISETIVRAGLAHLKIDELGLELHDIQLLRVMIEHFGGGPVGAETLAISLGESPETLEDYYEPYLIQIGLMQRTPRGRMATARAYAHLGLPVPEARTLTPHSPEQGTLL.

A disordered region spans residues 1–22; that stretch reads MDHTASLSPVRPEAQPTDDRER. Residues 1–185 are large ATPase domain (RuvB-L); it reads MDHTASLSPV…FGIVERFEFY (185 aa). ATP-binding positions include L24, R25, G66, K69, T70, T71, 132–134, R175, Y185, and R222; that span reads EDY. T70 is a binding site for Mg(2+). The interval 186 to 256 is small ATPAse domain (RuvB-S); the sequence is TPEELAAIVQ…IVRAGLAHLK (71 aa). The interval 259–350 is head domain (RuvB-H); it reads ELGLELHDIQ…PHSPEQGTLL (92 aa). Residues R314 and R319 each contribute to the DNA site.

This sequence belongs to the RuvB family. Homohexamer. Forms an RuvA(8)-RuvB(12)-Holliday junction (HJ) complex. HJ DNA is sandwiched between 2 RuvA tetramers; dsDNA enters through RuvA and exits via RuvB. An RuvB hexamer assembles on each DNA strand where it exits the tetramer. Each RuvB hexamer is contacted by two RuvA subunits (via domain III) on 2 adjacent RuvB subunits; this complex drives branch migration. In the full resolvosome a probable DNA-RuvA(4)-RuvB(12)-RuvC(2) complex forms which resolves the HJ.

It localises to the cytoplasm. It catalyses the reaction ATP + H2O = ADP + phosphate + H(+). The RuvA-RuvB-RuvC complex processes Holliday junction (HJ) DNA during genetic recombination and DNA repair, while the RuvA-RuvB complex plays an important role in the rescue of blocked DNA replication forks via replication fork reversal (RFR). RuvA specifically binds to HJ cruciform DNA, conferring on it an open structure. The RuvB hexamer acts as an ATP-dependent pump, pulling dsDNA into and through the RuvAB complex. RuvB forms 2 homohexamers on either side of HJ DNA bound by 1 or 2 RuvA tetramers; 4 subunits per hexamer contact DNA at a time. Coordinated motions by a converter formed by DNA-disengaged RuvB subunits stimulates ATP hydrolysis and nucleotide exchange. Immobilization of the converter enables RuvB to convert the ATP-contained energy into a lever motion, pulling 2 nucleotides of DNA out of the RuvA tetramer per ATP hydrolyzed, thus driving DNA branch migration. The RuvB motors rotate together with the DNA substrate, which together with the progressing nucleotide cycle form the mechanistic basis for DNA recombination by continuous HJ branch migration. Branch migration allows RuvC to scan DNA until it finds its consensus sequence, where it cleaves and resolves cruciform DNA. The chain is Holliday junction branch migration complex subunit RuvB from Treponema pallidum (strain Nichols).